An 864-amino-acid chain; its full sequence is DNA mismatch repair protein MutS (864 aa).

Residue 607–614 coordinates ATP; that stretch reads GPNMGGKS.

The protein belongs to the DNA mismatch repair MutS family.

Functionally, this protein is involved in the repair of mismatches in DNA. It is possible that it carries out the mismatch recognition step. This protein has a weak ATPase activity. The polypeptide is DNA mismatch repair protein MutS (Neisseria meningitidis serogroup C / serotype 2a (strain ATCC 700532 / DSM 15464 / FAM18)).